A 287-amino-acid chain; its full sequence is Pantothenate synthetase (287 aa).

37 to 44 contacts ATP; sequence MGALHEGH. The active-site Proton donor is H44. Position 68 (Q68) interacts with (R)-pantoate. Position 68 (Q68) interacts with beta-alanine. 154–157 contributes to the ATP binding site; that stretch reads GQKD. Q160 lines the (R)-pantoate pocket. ATP contacts are provided by residues V183 and 191–194; that span reads LSSR.

Belongs to the pantothenate synthetase family. As to quaternary structure, homodimer.

The protein localises to the cytoplasm. It catalyses the reaction (R)-pantoate + beta-alanine + ATP = (R)-pantothenate + AMP + diphosphate + H(+). It functions in the pathway cofactor biosynthesis; (R)-pantothenate biosynthesis; (R)-pantothenate from (R)-pantoate and beta-alanine: step 1/1. Functionally, catalyzes the condensation of pantoate with beta-alanine in an ATP-dependent reaction via a pantoyl-adenylate intermediate. The polypeptide is Pantothenate synthetase (Leifsonia xyli subsp. xyli (strain CTCB07)).